The following is a 434-amino-acid chain: Putative peptidase B (434 aa).

Mn(2+) is bound by residues Lys-198 and Asp-203. Lys-210 is a catalytic residue. Mn(2+) contacts are provided by Asp-221, Asp-280, and Glu-282. Arg-284 is a catalytic residue.

This sequence belongs to the peptidase M17 family. Homohexamer. Requires Mn(2+) as cofactor.

The protein resides in the cytoplasm. It catalyses the reaction Release of an N-terminal amino acid, Xaa, from a peptide or arylamide. Xaa is preferably Glu or Asp but may be other amino acids, including Leu, Met, His, Cys and Gln.. Its function is as follows. Probably plays an important role in intracellular peptide degradation. The protein is Putative peptidase B of Haemophilus influenzae (strain ATCC 51907 / DSM 11121 / KW20 / Rd).